The chain runs to 522 residues: Golgin subfamily A member 6-like protein 10 (522 aa).

Over residues 1–11 (MWPQPRLPPHP) the composition is skewed to pro residues. The tract at residues 1–77 (MWPQPRLPPH…DSATGIYGEG (77 aa)) is disordered. Over residues 51–62 (NGSSPDTATSGG) the composition is skewed to polar residues. Residues 157–328 (SKVEQLQDET…RLCEQEKLPG (172 aa)) are a coiled coil. Positions 439–452 (KELEKSGGAEEPRG) are enriched in basic and acidic residues. The segment at 439-503 (KELEKSGGAE…TGEAAGGAEE (65 aa)) is disordered. 2 stretches are compositionally biased toward low complexity: residues 456 to 471 (AAAA…PQGA) and 489 to 503 (GEAV…GAEE).

This sequence belongs to the GOLGA6 family.

The protein is Golgin subfamily A member 6-like protein 10 of Homo sapiens (Human).